A 94-amino-acid polypeptide reads, in one-letter code: Co-chaperonin GroES (94 aa).

The protein belongs to the GroES chaperonin family. As to quaternary structure, heptamer of 7 subunits arranged in a ring. Interacts with the chaperonin GroEL.

It is found in the cytoplasm. In terms of biological role, together with the chaperonin GroEL, plays an essential role in assisting protein folding. The GroEL-GroES system forms a nano-cage that allows encapsulation of the non-native substrate proteins and provides a physical environment optimized to promote and accelerate protein folding. GroES binds to the apical surface of the GroEL ring, thereby capping the opening of the GroEL channel. This Exiguobacterium sp. (strain ATCC BAA-1283 / AT1b) protein is Co-chaperonin GroES.